Here is a 554-residue protein sequence, read N- to C-terminus: Germacrene A synthase (554 aa).

The Mg(2+) site is built by Asp306, Asp310, Thr453, and Glu457. The DDXXD motif motif lies at 306–310 (DDTYD).

Belongs to the terpene synthase family. Requires Mg(2+) as cofactor.

It localises to the cytoplasm. Its subcellular location is the cytosol. The enzyme catalyses (2E,6E)-farnesyl diphosphate = (+)-(R)-germacrene A + diphosphate. It participates in secondary metabolite biosynthesis; terpenoid biosynthesis. In terms of biological role, sesquiterpene synthase involved in germacrene A biosynthesis. Also produces additional sesquiterpene products, including 4,5-di-epi-aristolochene, eremophilene, alpha-selinene. This chain is Germacrene A synthase, found in Pogostemon cablin (Patchouli).